A 542-amino-acid chain; its full sequence is MDFFTEYGEGNRYKIEEVIGKGSYGVVCSALDTHTGDKVAIKKINDIFEHVSDATRILREIKLLRLLRHPDIVEIKHILLPPSRREFKDIYVVFELMESDLHQVIKANDDLTPEHYQFFLYQLLRGLKYIHTANVFHRDLKPKNILANADCKLKICDFGLARVAFSDTPTAIFWTDYIATRWYRAPELCGSFFSKYTPAIDIWSIGCIFAELLTGKPLFPGKNVVHQLDIITDLLGTPSPETISRIRNEKARRYLNSMRRKKPIPFTQKFPNADPLAMRLLERMLAFDPKDRPSAEEALADPYFKNIANVDREPSAQPITKLEFEFERRRITKEDIRELIYREILEYHPKMLREFLEGTESTGFMYPSAVDHFKKQFAYLEEHYAKGSTAAPPERQHNSLPRPCVVYSDNRPQSTASVTEDLSRCLIRDNNLKSQDSASVGASRIPQGAAARPGKAVGSVLRYGNCSTSAAEQQYEQRRVVRNPAIAPNSSVPLGSSYPRRNQTCKSETGDVERIDSSQTGPPKPYVANKLPATVDGRSGHW.

One can recognise a Protein kinase domain in the interval 13–304 (YKIEEVIGKG…AEEALADPYF (292 aa)). ATP is bound by residues 19 to 27 (IGKGSYGVV) and Lys42. Asp139 (proton acceptor) is an active-site residue. Phosphothreonine is present on Thr175. A TXY motif is present at residues 175 to 177 (TDY). Tyr177 carries the post-translational modification Phosphotyrosine. Disordered regions lie at residues 388–412 (STAAPPERQHNSLPRPCVVYSDNRP) and 482–542 (RNPA…SGHW). Residues 488–507 (PNSSVPLGSSYPRRNQTCKS) show a composition bias toward polar residues.

Belongs to the protein kinase superfamily. CMGC Ser/Thr protein kinase family. MAP kinase subfamily. In terms of processing, dually phosphorylated on Thr-175 and Tyr-177, which activates the enzyme.

It catalyses the reaction L-seryl-[protein] + ATP = O-phospho-L-seryl-[protein] + ADP + H(+). It carries out the reaction L-threonyl-[protein] + ATP = O-phospho-L-threonyl-[protein] + ADP + H(+). Activated by threonine and tyrosine phosphorylation. This chain is Mitogen-activated protein kinase 14 (MPK14), found in Oryza sativa subsp. japonica (Rice).